Reading from the N-terminus, the 694-residue chain is Elongation factor G (694 aa).

The tr-type G domain occupies 9 to 288 (SKIRNIGIMA…VIVKWLPSPK (280 aa)). Residues 18 to 25 (AHIDAGKT), 82 to 86 (DTPGH), and 136 to 139 (NKMD) each bind GTP.

The protein belongs to the TRAFAC class translation factor GTPase superfamily. Classic translation factor GTPase family. EF-G/EF-2 subfamily.

The protein localises to the cytoplasm. Its function is as follows. Catalyzes the GTP-dependent ribosomal translocation step during translation elongation. During this step, the ribosome changes from the pre-translocational (PRE) to the post-translocational (POST) state as the newly formed A-site-bound peptidyl-tRNA and P-site-bound deacylated tRNA move to the P and E sites, respectively. Catalyzes the coordinated movement of the two tRNA molecules, the mRNA and conformational changes in the ribosome. This Chlamydia caviae (strain ATCC VR-813 / DSM 19441 / 03DC25 / GPIC) (Chlamydophila caviae) protein is Elongation factor G.